We begin with the raw amino-acid sequence, 387 residues long: Eukaryotic translation initiation factor 3 subunit M (387 aa).

Positions 181–340 (LSSKVMIELL…QKVHISSTMH (160 aa)) constitute a PCI domain.

This sequence belongs to the eIF-3 subunit M family. As to quaternary structure, component of the eukaryotic translation initiation factor 3 (eIF-3) complex. The eIF-3 complex interacts with pix.

The protein resides in the cytoplasm. Its subcellular location is the golgi apparatus. Component of the eukaryotic translation initiation factor 3 (eIF-3) complex, which is involved in protein synthesis of a specialized repertoire of mRNAs and, together with other initiation factors, stimulates binding of mRNA and methionyl-tRNAi to the 40S ribosome. The eIF-3 complex specifically targets and initiates translation of a subset of mRNAs involved in cell proliferation. The sequence is that of Eukaryotic translation initiation factor 3 subunit M from Drosophila sechellia (Fruit fly).